The primary structure comprises 227 residues: Phosphoglycolate phosphatase (227 aa).

Asp-8 functions as the Nucleophile in the catalytic mechanism. Residues Asp-8 and Asp-10 each coordinate Mg(2+). Residue Lys-150 coordinates substrate. 2 residues coordinate Mg(2+): Asp-173 and Asp-177.

This sequence belongs to the archaeal SPP-like hydrolase family. The cofactor is Mg(2+).

The catalysed reaction is 2-phosphoglycolate + H2O = glycolate + phosphate. In terms of biological role, catalyzes the dephosphorylation of 2-phosphoglycolate. The protein is Phosphoglycolate phosphatase of Sulfolobus acidocaldarius (strain ATCC 33909 / DSM 639 / JCM 8929 / NBRC 15157 / NCIMB 11770).